The primary structure comprises 366 residues: L-idonate 5-dehydrogenase (366 aa).

7 residues coordinate Zn(2+): Cys-56, His-81, Cys-111, Cys-114, Cys-117, Cys-125, and Glu-167.

This sequence belongs to the zinc-containing alcohol dehydrogenase family. The cofactor is Zn(2+).

The enzyme catalyses L-idonate + NAD(+) = 5-dehydro-D-gluconate + NADH + H(+). It functions in the pathway carbohydrate acid metabolism; L-idonate degradation. Its function is as follows. Involved in the catabolism of ascorbate to tartrate. The enzyme has no activity with NADP(+). In Vitis vinifera (Grape), this protein is L-idonate 5-dehydrogenase.